Consider the following 145-residue polypeptide: Cytochrome c2 (145 aa).

Residues methionine 1–alanine 21 form the signal peptide. At glutamine 22 the chain carries Pyrrolidone carboxylic acid. 4 residues coordinate heme c: cysteine 36, cysteine 39, histidine 40, and methionine 121.

The protein belongs to the cytochrome c family. Post-translationally, binds 1 heme c group covalently per subunit.

Its subcellular location is the periplasm. Its function is as follows. Cytochrome c2 is found mainly in purple, non-sulfur, photosynthetic bacteria where it functions as the electron donor to the oxidized bacteriochlorophyll in the photophosphorylation pathway. However, it may also have a role in the respiratory chain and is found in some non-photosynthetic bacteria. The polypeptide is Cytochrome c2 (cycA) (Cereibacter sphaeroides (strain ATCC 17023 / DSM 158 / JCM 6121 / CCUG 31486 / LMG 2827 / NBRC 12203 / NCIMB 8253 / ATH 2.4.1.) (Rhodobacter sphaeroides)).